A 173-amino-acid polypeptide reads, in one-letter code: Co-chaperone protein HscB homolog (173 aa).

One can recognise a J domain in the interval 5-77; sequence CHYALFDLQP…PRRARYLLAI (73 aa).

It belongs to the HscB family. Interacts with HscA and stimulates its ATPase activity.

Co-chaperone involved in the maturation of iron-sulfur cluster-containing proteins. Seems to help targeting proteins to be folded toward HscA. In Pseudomonas entomophila (strain L48), this protein is Co-chaperone protein HscB homolog.